Here is a 340-residue protein sequence, read N- to C-terminus: 2-deoxy-scyllo-inosamine dehydrogenase (340 aa).

Residues Cys-37, His-59, Cys-89, Cys-92, Cys-95, Cys-103, and Glu-144 each contribute to the Zn(2+) site.

It belongs to the zinc-containing alcohol dehydrogenase family. DOIA dehydrogenase subfamily. The cofactor is Zn(2+).

The catalysed reaction is 2-deoxy-scyllo-inosamine + NADP(+) = 3-amino-2,3-dideoxy-scyllo-inosose + NADPH + H(+). It catalyses the reaction 2-deoxy-scyllo-inosamine + NAD(+) = 3-amino-2,3-dideoxy-scyllo-inosose + NADH + H(+). Its pathway is metabolic intermediate biosynthesis; 2-deoxystreptamine biosynthesis; 2-deoxystreptamine from D-glucose 6-phosphate: step 3/4. It participates in antibiotic biosynthesis; neomycin biosynthesis. Catalyzes the oxidation of 2-deoxy-scyllo-inosamine (DOIA) with NAD(+) or NADP(+), forming 3-amino-2,3-dideoxy-scyllo-inosose (amino-DOI). The sequence is that of 2-deoxy-scyllo-inosamine dehydrogenase (neoA) from Streptomyces fradiae (Streptomyces roseoflavus).